The primary structure comprises 103 residues: Large ribosomal subunit protein bL28 (103 aa).

The protein belongs to the bacterial ribosomal protein bL28 family.

The polypeptide is Large ribosomal subunit protein bL28 (Anaplasma phagocytophilum (strain HZ)).